Reading from the N-terminus, the 318-residue chain is L-lactate dehydrogenase (318 aa).

NAD(+) contacts are provided by residues valine 20, aspartate 41, lysine 46, tyrosine 71, and 85-86; that span reads GA. Substrate-binding positions include glutamine 88, arginine 94, and 126–129; that span reads NPVD. Residues 124–126 and serine 149 contribute to the NAD(+) site; that span reads ATN. Residue 154 to 157 coordinates substrate; it reads DTAR. Residues arginine 159 and histidine 174 each contribute to the beta-D-fructose 1,6-bisphosphate site. Histidine 181 acts as the Proton acceptor in catalysis. Tyrosine 226 carries the phosphotyrosine modification. Threonine 235 provides a ligand contact to substrate.

The protein belongs to the LDH/MDH superfamily. LDH family. Homotetramer.

It localises to the cytoplasm. The enzyme catalyses (S)-lactate + NAD(+) = pyruvate + NADH + H(+). It functions in the pathway fermentation; pyruvate fermentation to lactate; (S)-lactate from pyruvate: step 1/1. Allosterically activated by fructose 1,6-bisphosphate (FBP). In terms of biological role, catalyzes the conversion of lactate to pyruvate. In Priestia megaterium (Bacillus megaterium), this protein is L-lactate dehydrogenase.